The primary structure comprises 114 residues: UPF0339 protein plu2779 (114 aa).

Repeat copies occupy residues 11-59 (TKNK…NFEI) and 62-110 (NKSG…VRDL).

The protein belongs to the UPF0339 family. Duplicated subfamily.

In Photorhabdus laumondii subsp. laumondii (strain DSM 15139 / CIP 105565 / TT01) (Photorhabdus luminescens subsp. laumondii), this protein is UPF0339 protein plu2779.